We begin with the raw amino-acid sequence, 322 residues long: DNA primase small subunit PriS (322 aa).

Residues Asp-100, Asp-102, and Asp-228 contribute to the active site.

It belongs to the eukaryotic-type primase small subunit family. As to quaternary structure, heterodimer of a small subunit (PriS) and a large subunit (PriL). Mg(2+) serves as cofactor. The cofactor is Mn(2+).

In terms of biological role, catalytic subunit of DNA primase, an RNA polymerase that catalyzes the synthesis of short RNA molecules used as primers for DNA polymerase during DNA replication. The small subunit contains the primase catalytic core and has DNA synthesis activity on its own. Binding to the large subunit stabilizes and modulates the activity, increasing the rate of DNA synthesis while decreasing the length of the DNA fragments, and conferring RNA synthesis capability. The DNA polymerase activity may enable DNA primase to also catalyze primer extension after primer synthesis. May also play a role in DNA repair. This is DNA primase small subunit PriS from Sulfolobus acidocaldarius (strain ATCC 33909 / DSM 639 / JCM 8929 / NBRC 15157 / NCIMB 11770).